Reading from the N-terminus, the 416-residue chain is Acyl-coenzyme A amino acid N-acyltransferase 1 (416 aa).

A Phosphoserine modification is found at Ser-125. Catalysis depends on charge relay system residues Ser-235, Asp-325, and His-359. Ser-414 carries the post-translational modification Phosphoserine. The Microbody targeting signal signature appears at 414-416 (SKL).

The protein belongs to the C/M/P thioester hydrolase family. In terms of tissue distribution, expressed mainly in liver and kidney with low levels in adrenal and little or no expression in other tissues.

The protein resides in the peroxisome. The enzyme catalyses tetracosanoyl-CoA + taurine = N-tetracosanoyl-taurine + CoA + H(+). The catalysed reaction is eicosanoyl-CoA + taurine = N-eicosanoyl-taurine + CoA + H(+). It catalyses the reaction taurine + octadecanoyl-CoA = N-octadecanoyl-taurine + CoA + H(+). It carries out the reaction taurine + hexadecanoyl-CoA = N-hexadecanoyl-taurine + CoA + H(+). The enzyme catalyses tetradecanoyl-CoA + taurine = N-tetradecanoyl-taurine + CoA + H(+). The catalysed reaction is dodecanoyl-CoA + taurine = N-dodecanoyl-taurine + CoA + H(+). Acyltransferase which efficiently conjugates very long-chain and long-chain fatty acids to taurine. Shows no conjugation activity in the presence of glycine. This is Acyl-coenzyme A amino acid N-acyltransferase 1 from Mus musculus (Mouse).